We begin with the raw amino-acid sequence, 650 residues long: Probable LIM domain-containing serine/threonine-protein kinase DDB_G0287001 (650 aa).

2 LIM zinc-binding domains span residues N4 to A63 and R64 to K122. Disordered stretches follow at residues K118–K138, L171–M197, and L293–T320. Residues S173–N188 show a composition bias toward gly residues. The region spanning V386–L643 is the Protein kinase domain. Residues I392 to V400 and K413 contribute to the ATP site. The active-site Proton acceptor is D509.

It belongs to the protein kinase superfamily. TKL Ser/Thr protein kinase family.

It catalyses the reaction L-seryl-[protein] + ATP = O-phospho-L-seryl-[protein] + ADP + H(+). The enzyme catalyses L-threonyl-[protein] + ATP = O-phospho-L-threonyl-[protein] + ADP + H(+). In Dictyostelium discoideum (Social amoeba), this protein is Probable LIM domain-containing serine/threonine-protein kinase DDB_G0287001.